The primary structure comprises 162 residues: ATP synthase subunit delta, mitochondrial (162 aa).

The N-terminal 25 residues, 1–25 (MSSLRLLASAARRATTHVAYTRRGY), are a transit peptide targeting the mitochondrion.

The protein belongs to the ATPase epsilon chain family. As to quaternary structure, F-type ATPases have 2 components, CF(1) - the catalytic core - and CF(0) - the membrane proton channel. CF(1) has five subunits: alpha(3), beta(3), gamma(1), delta(1), epsilon(1). CF(0) has three main subunits: a, b and c.

Its subcellular location is the mitochondrion. It localises to the mitochondrion inner membrane. Mitochondrial membrane ATP synthase (F(1)F(0) ATP synthase or Complex V) produces ATP from ADP in the presence of a proton gradient across the membrane which is generated by electron transport complexes of the respiratory chain. F-type ATPases consist of two structural domains, F(1) - containing the extramembraneous catalytic core, and F(0) - containing the membrane proton channel, linked together by a central stalk and a peripheral stalk. During catalysis, ATP turnover in the catalytic domain of F(1) is coupled via a rotary mechanism of the central stalk subunits to proton translocation. Part of the complex F(1) domain and of the central stalk which is part of the complex rotary element. Rotation of the central stalk against the surrounding alpha(3)beta(3) subunits leads to hydrolysis of ATP in three separate catalytic sites on the beta subunits. The chain is ATP synthase subunit delta, mitochondrial (atpD) from Agaricus bisporus (White button mushroom).